A 115-amino-acid polypeptide reads, in one-letter code: Large ribosomal subunit protein uL18 (115 aa).

The protein belongs to the universal ribosomal protein uL18 family. As to quaternary structure, part of the 50S ribosomal subunit; part of the 5S rRNA/L5/L18/L25 subcomplex. Contacts the 5S and 23S rRNAs.

Functionally, this is one of the proteins that bind and probably mediate the attachment of the 5S RNA into the large ribosomal subunit, where it forms part of the central protuberance. This is Large ribosomal subunit protein uL18 from Vesicomyosocius okutanii subsp. Calyptogena okutanii (strain HA).